The sequence spans 344 residues: 3-dehydroquinate synthase (344 aa).

Residues 60–65 (DGEEYK), 94–98 (GVISD), 118–119 (TT), Lys131, Lys140, and 158–161 (FLNT) contribute to the NAD(+) site. Residues Glu173, His232, and His249 each coordinate Zn(2+).

Belongs to the sugar phosphate cyclases superfamily. Dehydroquinate synthase family. The cofactor is Co(2+). Zn(2+) is required as a cofactor. It depends on NAD(+) as a cofactor.

The protein resides in the cytoplasm. The enzyme catalyses 7-phospho-2-dehydro-3-deoxy-D-arabino-heptonate = 3-dehydroquinate + phosphate. Its pathway is metabolic intermediate biosynthesis; chorismate biosynthesis; chorismate from D-erythrose 4-phosphate and phosphoenolpyruvate: step 2/7. In terms of biological role, catalyzes the conversion of 3-deoxy-D-arabino-heptulosonate 7-phosphate (DAHP) to dehydroquinate (DHQ). The chain is 3-dehydroquinate synthase from Campylobacter hominis (strain ATCC BAA-381 / DSM 21671 / CCUG 45161 / LMG 19568 / NCTC 13146 / CH001A).